The primary structure comprises 201 residues: Proteasome subunit beta 1 (201 aa).

A propeptide spans 1 to 10 (removed in mature form; by autocatalysis); that stretch reads MNGSPSAMKG. Thr11 functions as the Nucleophile in the catalytic mechanism.

Belongs to the peptidase T1B family. In terms of assembly, the 20S proteasome core is composed of 14 alpha and 14 beta subunits that assemble into four stacked heptameric rings, resulting in a barrel-shaped structure. The two inner rings, each composed of seven catalytic beta subunits, are sandwiched by two outer rings, each composed of seven alpha subunits. The catalytic chamber with the active sites is on the inside of the barrel. Has a gated structure, the ends of the cylinder being occluded by the N-termini of the alpha-subunits. Is capped at one or both ends by the proteasome regulatory ATPase, PAN.

It is found in the cytoplasm. The enzyme catalyses Cleavage of peptide bonds with very broad specificity.. With respect to regulation, the formation of the proteasomal ATPase PAN-20S proteasome complex, via the docking of the C-termini of PAN into the intersubunit pockets in the alpha-rings, triggers opening of the gate for substrate entry. Interconversion between the open-gate and close-gate conformations leads to a dynamic regulation of the 20S proteasome proteolysis activity. Its function is as follows. Component of the proteasome core, a large protease complex with broad specificity involved in protein degradation. The protein is Proteasome subunit beta 1 of Thermococcus gammatolerans (strain DSM 15229 / JCM 11827 / EJ3).